Here is a 539-residue protein sequence, read N- to C-terminus: MSKLIEYDETARRAMEVGMDKLADTVRVTLGPRGRHVVLAKAFGGPTVTNDGVTVAREIELEDPFEDLGAQLVKSVATKTNDVAGDGTTTATILAQALIKGGLRLVAAGVNPIALGVGIGKAADAVSEALLASATPVSGKTGIAQVATVSSRDEQIGDLVGEAMSKVGHDGVVSVEESSTLGTELEFTEGIGFDKGFLSAYFVTDFDNQQAVLEDALILLHQDKISSLPDLLPLLEKVAGTGKPLLIVAEDVEGEALATLVVNAIRKTLKAVAVKGPYFGDRRKAFLEDLAVVTGGQVVNPDAGMVLREVGLEVLGSARRVVVSKDDTVIVDGGGTAEAVANRAKHLRAEIDKSDSDWDREKLGERLAKLAGGVAVIKVGAATETALKERKESVEDAVAAAKAAVEEGIVPGGGASLIHQARKALTELRASLTGDEVLGVDVFSEALAAPLFWIAANAGLDGSVVVNKVSELPAGHGLNVNTLSYGDLAADGVIDPVKVTRSAVLNASSVARMVLTTETVVVDKPAKAEDHDHHHGHAH.

ATP is bound by residues 29–32, 86–90, glycine 413, and aspartate 495; these read TLGP and DGTTT.

It belongs to the chaperonin (HSP60) family. Forms a cylinder of 14 subunits composed of two heptameric rings stacked back-to-back. Interacts with the co-chaperonin GroES.

The protein localises to the cytoplasm. The enzyme catalyses ATP + H2O + a folded polypeptide = ADP + phosphate + an unfolded polypeptide.. Together with its co-chaperonin GroES, plays an essential role in assisting protein folding. The GroEL-GroES system forms a nano-cage that allows encapsulation of the non-native substrate proteins and provides a physical environment optimized to promote and accelerate protein folding. This is Chaperonin GroEL 1 from Mycobacterium bovis (strain ATCC BAA-935 / AF2122/97).